The following is a 1113-amino-acid chain: Period circadian protein homolog 3 (1113 aa).

Positions 1–48 (MDPCGDPAVPGGDCPQTRGPGLQGASGQEGPLQGTCVDSSHSEHEDRN) are disordered. Positions 54–63 (LIMVVQEMKK) match the Nuclear export signal 1 motif. PAS domains are found at residues 120–187 (LASE…PTQL) and 258–324 (YEAP…KVLK). A PAC domain is found at 333–376 (HSPVRFCTQNGEYVILDSSWSSFVNPWSRKVSFIIGRHKVRTSP). The Nuclear export signal 3 signature appears at 399–408 (LQEQIHKLLL). Positions 418 to 427 (GYGSLGSSGS) are enriched in low complexity. 5 disordered regions span residues 418-451 (GYGS…GQHE), 485-530 (VAET…SSSY), 561-580 (TSSS…SQRD), 718-742 (HSRC…DTSS), and 871-906 (LVPA…PFIS). 2 stretches are compositionally biased toward polar residues: residues 428–441 (QEQH…SESS) and 501–530 (FSSS…SSSY). Residues 551–750 (LKRKCISCTN…SSPGAHLCPH (200 aa)) are CSNK1E binding domain. The span at 566-580 (EEAKPIPEVDSSQRD) shows a compositional bias: basic and acidic residues. A Nuclear localization signal motif is present at residues 719-735 (SRCAGSERQKHKRKKLP). Residues 889–901 (RRVEENWEAHSEE) show a composition bias toward basic and acidic residues. A Phosphoserine modification is found at Ser907. A Nuclear export signal 2 motif is present at residues 913–920 (LQLNLLQE). The tract at residues 921–1010 (EMPAPSESAD…DRQRDEALPG (90 aa)) is disordered. Residues 962–986 (ATATAQQESAAASGSSASSIYFSST) are compositionally biased toward low complexity. The span at 993-1007 (SENRQRPQDRQRDEA) shows a compositional bias: basic and acidic residues. The tract at residues 1035–1113 (ERGREEVLKQ…LEQHPAEDTS (79 aa)) is CRY binding domain.

In terms of assembly, homodimer. Component of the circadian core oscillator, which includes the CRY proteins, CLOCK or NPAS2, BMAL1 or BMAL2, CSNK1D and/or CSNK1E, TIMELESS and the PER proteins. Interacts directly with PER1, PER2, CRY1, CRY2, and TIMELESS; interaction with CRY1 and CRY2 is weak and not rhythmic. Interacts with FBXW11 and BTRC. Post-translationally, phosphorylation by CSNK1E is weak and appears to require association with PER1 and translocation to the nucleus. In terms of processing, ubiquitinated. Widely expressed. Expressed in heart, brain, lung, liver, skeletal muscle, testis, and at low level in the spleen and kidney. In brain, mainly found in the SCN, hippocampus, piriform cortex, and cerebellum. Lower level of expression in the neocortex. Expression exhibits synchronous oscillations in liver, skeletal muscle and testis.

The protein resides in the cytoplasm. It localises to the nucleus. In terms of biological role, originally described as a core component of the circadian clock. The circadian clock, an internal time-keeping system, regulates various physiological processes through the generation of approximately 24 hour circadian rhythms in gene expression, which are translated into rhythms in metabolism and behavior. It is derived from the Latin roots 'circa' (about) and 'diem' (day) and acts as an important regulator of a wide array of physiological functions including metabolism, sleep, body temperature, blood pressure, endocrine, immune, cardiovascular, and renal function. Consists of two major components: the central clock, residing in the suprachiasmatic nucleus (SCN) of the brain, and the peripheral clocks that are present in nearly every tissue and organ system. Both the central and peripheral clocks can be reset by environmental cues, also known as Zeitgebers (German for 'timegivers'). The predominant Zeitgeber for the central clock is light, which is sensed by retina and signals directly to the SCN. The central clock entrains the peripheral clocks through neuronal and hormonal signals, body temperature and feeding-related cues, aligning all clocks with the external light/dark cycle. Circadian rhythms allow an organism to achieve temporal homeostasis with its environment at the molecular level by regulating gene expression to create a peak of protein expression once every 24 hours to control when a particular physiological process is most active with respect to the solar day. Transcription and translation of core clock components (CLOCK, NPAS2, BMAL1, BMAL2, PER1, PER2, PER3, CRY1 and CRY2) plays a critical role in rhythm generation, whereas delays imposed by post-translational modifications (PTMs) are important for determining the period (tau) of the rhythms (tau refers to the period of a rhythm and is the length, in time, of one complete cycle). A diurnal rhythm is synchronized with the day/night cycle, while the ultradian and infradian rhythms have a period shorter and longer than 24 hours, respectively. Disruptions in the circadian rhythms contribute to the pathology of cardiovascular diseases, cancer, metabolic syndromes and aging. A transcription/translation feedback loop (TTFL) forms the core of the molecular circadian clock mechanism. Transcription factors, CLOCK or NPAS2 and BMAL1 or BMAL2, form the positive limb of the feedback loop, act in the form of a heterodimer and activate the transcription of core clock genes and clock-controlled genes (involved in key metabolic processes), harboring E-box elements (5'-CACGTG-3') within their promoters. The core clock genes: PER1/2/3 and CRY1/2 which are transcriptional repressors form the negative limb of the feedback loop and interact with the CLOCK|NPAS2-BMAL1|BMAL2 heterodimer inhibiting its activity and thereby negatively regulating their own expression. This heterodimer also activates nuclear receptors NR1D1, NR1D2, RORA, RORB and RORG, which form a second feedback loop and which activate and repress BMAL1 transcription, respectively. Has a redundant role with the other PER proteins PER1 and PER2 and is not essential for the circadian rhythms maintenance. In contrast, plays an important role in sleep-wake timing and sleep homeostasis probably through the transcriptional regulation of sleep homeostasis-related genes, without influencing circadian parameters. Can bind heme. The sequence is that of Period circadian protein homolog 3 (Per3) from Mus musculus (Mouse).